The sequence spans 425 residues: Multifunctional CCA protein (425 aa).

ATP is bound by residues G8 and R11. Residues G8 and R11 each contribute to the CTP site. Residues E21 and D23 each contribute to the Mg(2+) site. Positions 91, 137, and 140 each coordinate ATP. 3 residues coordinate CTP: R91, R137, and R140. Residues 228-329 (TGVHTLMVLD…VDLLDRLGAL (102 aa)) enclose the HD domain.

Belongs to the tRNA nucleotidyltransferase/poly(A) polymerase family. Bacterial CCA-adding enzyme type 1 subfamily. In terms of assembly, monomer. Can also form homodimers and oligomers. It depends on Mg(2+) as a cofactor. Requires Ni(2+) as cofactor.

It carries out the reaction a tRNA precursor + 2 CTP + ATP = a tRNA with a 3' CCA end + 3 diphosphate. The enzyme catalyses a tRNA with a 3' CCA end + 2 CTP + ATP = a tRNA with a 3' CCACCA end + 3 diphosphate. Its function is as follows. Catalyzes the addition and repair of the essential 3'-terminal CCA sequence in tRNAs without using a nucleic acid template. Adds these three nucleotides in the order of C, C, and A to the tRNA nucleotide-73, using CTP and ATP as substrates and producing inorganic pyrophosphate. tRNA 3'-terminal CCA addition is required both for tRNA processing and repair. Also involved in tRNA surveillance by mediating tandem CCA addition to generate a CCACCA at the 3' terminus of unstable tRNAs. While stable tRNAs receive only 3'-terminal CCA, unstable tRNAs are marked with CCACCA and rapidly degraded. In Methylococcus capsulatus (strain ATCC 33009 / NCIMB 11132 / Bath), this protein is Multifunctional CCA protein.